The primary structure comprises 306 residues: Cysteine synthase (306 aa).

K46 is modified (N6-(pyridoxal phosphate)lysine). Residues N76, 180-184 (GSGGT), and S267 contribute to the pyridoxal 5'-phosphate site.

The protein belongs to the cysteine synthase/cystathionine beta-synthase family. As to quaternary structure, homodimer. Pyridoxal 5'-phosphate is required as a cofactor.

It catalyses the reaction O-acetyl-L-serine + hydrogen sulfide = L-cysteine + acetate. It participates in amino-acid biosynthesis; L-cysteine biosynthesis; L-cysteine from L-serine: step 2/2. The sequence is that of Cysteine synthase (cysM) from Helicobacter pylori (strain ATCC 700392 / 26695) (Campylobacter pylori).